The sequence spans 145 residues: D-aminoacyl-tRNA deacylase (145 aa).

A Gly-cisPro motif, important for rejection of L-amino acids motif is present at residues 137–138; the sequence is GP.

Belongs to the DTD family. As to quaternary structure, homodimer.

The protein localises to the cytoplasm. The catalysed reaction is glycyl-tRNA(Ala) + H2O = tRNA(Ala) + glycine + H(+). The enzyme catalyses a D-aminoacyl-tRNA + H2O = a tRNA + a D-alpha-amino acid + H(+). An aminoacyl-tRNA editing enzyme that deacylates mischarged D-aminoacyl-tRNAs. Also deacylates mischarged glycyl-tRNA(Ala), protecting cells against glycine mischarging by AlaRS. Acts via tRNA-based rather than protein-based catalysis; rejects L-amino acids rather than detecting D-amino acids in the active site. By recycling D-aminoacyl-tRNA to D-amino acids and free tRNA molecules, this enzyme counteracts the toxicity associated with the formation of D-aminoacyl-tRNA entities in vivo and helps enforce protein L-homochirality. The sequence is that of D-aminoacyl-tRNA deacylase from Salmonella choleraesuis (strain SC-B67).